The primary structure comprises 547 residues: Chaperonin GroEL (547 aa).

ATP is bound by residues 30–33 (TLGP), K51, 87–91 (DGTTT), G415, and D495.

This sequence belongs to the chaperonin (HSP60) family. Forms a cylinder of 14 subunits composed of two heptameric rings stacked back-to-back. Interacts with the co-chaperonin GroES.

It is found in the cytoplasm. The enzyme catalyses ATP + H2O + a folded polypeptide = ADP + phosphate + an unfolded polypeptide.. Together with its co-chaperonin GroES, plays an essential role in assisting protein folding. The GroEL-GroES system forms a nano-cage that allows encapsulation of the non-native substrate proteins and provides a physical environment optimized to promote and accelerate protein folding. This is Chaperonin GroEL from Thiobacillus denitrificans (strain ATCC 25259 / T1).